The following is a 1220-amino-acid chain: MIPEKPNDVIWTDDQWKSIYAKGQDTLVAAAAGSGKTAVLVERIIQRILRDEIDVDRLLVVTFTNLSAREMKHRVEKRIQKASLEDPSNTHLKNQRVKIHQAQISTLHSFCLKLIQQHYDVLDIDPNFRTSSEAENILLLEQTIDEVLEKYYAELNPAFIDLSEQLSSDRSDERLRQIIKSVYYFAVANPQPEQWLKSLVSPYKDNQAQDEFLELLMNLAKVFMNTALENLNKSFDLYSELAGCDKQLEVIEDERAFIARAMEGGILNTELISKHSFISRFPSATKKIKEANDGNLELLESAKAYYDDYKGAVEKVQQDYFSRSAEDLKADMAKLAPRVEVLSQITRDVIDTFSKKKRSRNILDFSDYEHFALKILMNEDGTPTDLAKHYRNGFDEILVDEYQDTNRVQEQILSCIKRGDETDGNLFMVGDVKQSIYKFRQADPSLFIEKYSRFSHDGTTGMRIDLSQNFRSRPEVLSTTNYLFKHMMDESVGEIIYDEAAQLYYGAPFDDKPHPLNLNVMVEDKESELTGTEQEAEYIANQVEEIMNHREVYDMGTGSYRKPSYKDIVILERGYNRSRELQQAFKNRDIPFHVNSKEGYFEQTEVRLVLSFLRTVDNPLQDIYLVGLMRSVIYQFTEDELARIRVTSPNDDYFYQSIQHYLKTKEADPDLVAKLQDFLKDLKFYQEFSLEHPVYQLIDRFYNNRLVIQYFSGMIGGKGRRANLYGLYNKAIEFENSSFRGLFQFIRFIDELIDRGKDFGEENVVGPNDDVVRMMTIHASKGLEFPFVIYSGLSKSFNRSDLYKPVILNQKYGMGMTYFDVEKDFAFPSLASVTLRAITEKEMISEEMRLMYVALTRAKEQLFLVGRVKAEKELDKMLNTAISNNMLPMSYRLEVKNPLQLIYAILAKYQANHLTNDLKFERNIDELDDAIHPYAEIHIDEYSDIAQDIHQNEDEEFRTVNDIVNYQSTNTERQQAIETQLDYQYPYQKDVVKPTKQSVSELKRQLETEETGTSYERVRQYQLGASTYERPKFMRQHKKRKANEIGTLMHTVMQHLPFKEERMTSAELDEYIDGLIEKNIIEDDAKPDIRMDEVMNFIKSDLYLEIAQSDQIMREMPFVVNQSKVDHQMNDDEDVSIIQGMIDLIYRKDNQYYFVDYKTDTFNQRRGVSDEELGEQLKARYKIQMYYYRSALETILQKEVKGYLYFFKFGTLSLEETEKH.

The 465-residue stretch at 9 to 473 (VIWTDDQWKS…IDLSQNFRSR (465 aa)) folds into the UvrD-like helicase ATP-binding domain. An ATP-binding site is contributed by 30 to 37 (AAAGSGKT). One can recognise a UvrD-like helicase C-terminal domain in the interval 474–782 (PEVLSTTNYL…RMMTIHASKG (309 aa)).

This sequence belongs to the helicase family. AddA subfamily. As to quaternary structure, heterodimer of AddA and AddB/RexB. Requires Mg(2+) as cofactor.

It catalyses the reaction Couples ATP hydrolysis with the unwinding of duplex DNA by translocating in the 3'-5' direction.. The catalysed reaction is ATP + H2O = ADP + phosphate + H(+). In terms of biological role, the heterodimer acts as both an ATP-dependent DNA helicase and an ATP-dependent, dual-direction single-stranded exonuclease. Recognizes the chi site generating a DNA molecule suitable for the initiation of homologous recombination. The AddA nuclease domain is required for chi fragment generation; this subunit has the helicase and 3' -&gt; 5' nuclease activities. The protein is ATP-dependent helicase/nuclease subunit A of Staphylococcus carnosus (strain TM300).